The following is a 395-amino-acid chain: Putative nickel insertion protein (395 aa).

This sequence belongs to the LarC family.

In Roseiflexus castenholzii (strain DSM 13941 / HLO8), this protein is Putative nickel insertion protein.